We begin with the raw amino-acid sequence, 212 residues long: ER lumen protein-retaining receptor 2 (212 aa).

Residues 1–4 (MNVF) lie on the Lumenal side of the membrane. Residues 5 to 24 (RLSGDLCHLAAIIILLLKIW) form a helical membrane-spanning segment. The Cytoplasmic portion of the chain corresponds to 25–32 (NSRSCAGI). Residues 33–52 (SGKSQLLFAMVFTTRYLDLF) form a helical membrane-spanning segment. The tract at residues 47–48 (RY) is interaction with the K-D-E-L motif on target proteins. Topologically, residues 53–58 (TSFISL) are lumenal. The helical transmembrane segment at 59–79 (YNTSMKVIYMGCAYATVYLIY) threads the bilayer. Topologically, residues 80-92 (MKFKATYDGNHDT) are cytoplasmic. A helical membrane pass occupies residues 93–110 (FRVEFLVVPVGGLSVLVN). The Lumenal segment spans residues 111–116 (HDFSPL). The helical transmembrane segment at 117-135 (EILWTFSIYLESVAILPQL) threads the bilayer. The Cytoplasmic portion of the chain corresponds to 136-149 (FMISKTGEAETITT). Residues 150–168 (HYLFFLGLYRALYLFNWIW) traverse the membrane as a helical segment. The tract at residues 159-169 (RALYLFNWIWR) is interaction with the K-D-E-L motif on target proteins. At 169–178 (RFSFEGFFDL) the chain is on the lumenal side. A helical membrane pass occupies residues 179-199 (IAIVAGVVQTILYCDFFYLYV). Topologically, residues 200–212 (TKVLKGKKLSLPA) are cytoplasmic. The important for recycling of cargo proteins with the sequence motif K-D-E-L from the Golgi to the endoplasmic reticulum stretch occupies residues 204–207 (KGKK).

It belongs to the ERD2 family.

The protein localises to the endoplasmic reticulum membrane. It is found in the golgi apparatus membrane. The protein resides in the cytoplasmic vesicle. It localises to the COPI-coated vesicle membrane. Functionally, receptor for the C-terminal sequence motif K-D-E-L that is present on endoplasmic reticulum resident proteins and that mediates their recycling from the Golgi back to the endoplasmic reticulum. Binding is pH dependent, and is optimal at pH 5-5.4. In Xenopus laevis (African clawed frog), this protein is ER lumen protein-retaining receptor 2 (kdelr2).